Consider the following 160-residue polypeptide: MTNIRIGQGYDVHQLTEGRKLILGGVEIPFEKGLLGHSDADALLHAVTDALLGAAGLGDIGSHFPDTAAEFKDADSRVLLRAAYQSVQAQGWQAVNVDTTVIAQKPKLAPHIPQMRANIAADLGIDISCVNIKGKTNEKLGYLGRMEGIEAQAAVLLVRI.

The a divalent metal cation site is built by D11 and H13. 4-CDP-2-C-methyl-D-erythritol 2-phosphate contacts are provided by residues 11–13 (DVH) and 37–38 (HS). A divalent metal cation is bound at residue H45. 4-CDP-2-C-methyl-D-erythritol 2-phosphate-binding positions include 59–61 (DIG) and R145.

It belongs to the IspF family. As to quaternary structure, homotrimer. The cofactor is a divalent metal cation.

The enzyme catalyses 4-CDP-2-C-methyl-D-erythritol 2-phosphate = 2-C-methyl-D-erythritol 2,4-cyclic diphosphate + CMP. It functions in the pathway isoprenoid biosynthesis; isopentenyl diphosphate biosynthesis via DXP pathway; isopentenyl diphosphate from 1-deoxy-D-xylulose 5-phosphate: step 4/6. Involved in the biosynthesis of isopentenyl diphosphate (IPP) and dimethylallyl diphosphate (DMAPP), two major building blocks of isoprenoid compounds. Catalyzes the conversion of 4-diphosphocytidyl-2-C-methyl-D-erythritol 2-phosphate (CDP-ME2P) to 2-C-methyl-D-erythritol 2,4-cyclodiphosphate (ME-CPP) with a corresponding release of cytidine 5-monophosphate (CMP). The sequence is that of 2-C-methyl-D-erythritol 2,4-cyclodiphosphate synthase from Neisseria meningitidis serogroup B (strain ATCC BAA-335 / MC58).